The chain runs to 179 residues: Large ribosomal subunit protein uL5 (179 aa).

It belongs to the universal ribosomal protein uL5 family. As to quaternary structure, part of the 50S ribosomal subunit; part of the 5S rRNA/L5/L18/L25 subcomplex. Contacts the 5S rRNA and the P site tRNA. Forms a bridge to the 30S subunit in the 70S ribosome.

Functionally, this is one of the proteins that bind and probably mediate the attachment of the 5S RNA into the large ribosomal subunit, where it forms part of the central protuberance. In the 70S ribosome it contacts protein S13 of the 30S subunit (bridge B1b), connecting the 2 subunits; this bridge is implicated in subunit movement. Contacts the P site tRNA; the 5S rRNA and some of its associated proteins might help stabilize positioning of ribosome-bound tRNAs. The protein is Large ribosomal subunit protein uL5 of Cellvibrio japonicus (strain Ueda107) (Pseudomonas fluorescens subsp. cellulosa).